The sequence spans 230 residues: UPF0173 metal-dependent hydrolase MM_2300 (230 aa).

Belongs to the UPF0173 family.

This Methanosarcina mazei (strain ATCC BAA-159 / DSM 3647 / Goe1 / Go1 / JCM 11833 / OCM 88) (Methanosarcina frisia) protein is UPF0173 metal-dependent hydrolase MM_2300.